The sequence spans 221 residues: Large ribosomal subunit protein uL4 (221 aa).

The segment at 45-100 (ARQGTHKTKNRGEVSGAGRKPFKQKGTGRARQGSIRAPQMTGGGIVHGPTPRDYSQ) is disordered.

It belongs to the universal ribosomal protein uL4 family. In terms of assembly, part of the 50S ribosomal subunit.

Its function is as follows. One of the primary rRNA binding proteins, this protein initially binds near the 5'-end of the 23S rRNA. It is important during the early stages of 50S assembly. It makes multiple contacts with different domains of the 23S rRNA in the assembled 50S subunit and ribosome. Functionally, forms part of the polypeptide exit tunnel. This Leifsonia xyli subsp. xyli (strain CTCB07) protein is Large ribosomal subunit protein uL4.